A 406-amino-acid polypeptide reads, in one-letter code: Argininosuccinate synthase (406 aa).

ATP contacts are provided by residues 12–20 (AYSGGLDTS) and Ala39. 2 residues coordinate L-citrulline: Tyr90 and Ser95. Gly120 contacts ATP. L-aspartate is bound by residues Thr122, Asn126, and Asp127. Position 126 (Asn126) interacts with L-citrulline. Residues Arg130, Ser179, Ser188, Glu264, and Tyr276 each coordinate L-citrulline.

It belongs to the argininosuccinate synthase family. Type 1 subfamily. As to quaternary structure, homotetramer.

Its subcellular location is the cytoplasm. It carries out the reaction L-citrulline + L-aspartate + ATP = 2-(N(omega)-L-arginino)succinate + AMP + diphosphate + H(+). It participates in amino-acid biosynthesis; L-arginine biosynthesis; L-arginine from L-ornithine and carbamoyl phosphate: step 2/3. This is Argininosuccinate synthase from Geobacter sp. (strain M21).